Consider the following 256-residue polypeptide: MNNIWWQTKGQGNVHLVLLHGWGLNAEVWRCIDEELSSHFTLHLVDLPGFGRSRGFGALSLADMAEVVLRQAPDKAIWLGWSLGGLVASQIALTHPERVLALVTVASSPCFSARDEWPGIKPDVLAGFQQQLSDDFQRTVERFLALQTMGTETARQDARALKKTVLALPMPEVDVLNGGLEILKTVDLRQPLQNVPMPFLRLYGYLDGLVPRKVVPMLDKLWPHSESYIFAKAAHAPFISHPDEFCHLLVALKQRV.

An AB hydrolase-1 domain is found at 15 to 242 (HLVLLHGWGL…AAHAPFISHP (228 aa)). Substrate is bound by residues Trp22, 82-83 (SL), and 143-147 (FLALQ). Ser82 functions as the Nucleophile in the catalytic mechanism. Catalysis depends on residues Asp207 and His235. A substrate-binding site is contributed by His235.

The protein belongs to the AB hydrolase superfamily. Carboxylesterase BioH family. As to quaternary structure, monomer.

Its subcellular location is the cytoplasm. It carries out the reaction 6-carboxyhexanoyl-[ACP] methyl ester + H2O = 6-carboxyhexanoyl-[ACP] + methanol + H(+). Its pathway is cofactor biosynthesis; biotin biosynthesis. Its function is as follows. The physiological role of BioH is to remove the methyl group introduced by BioC when the pimeloyl moiety is complete. It allows to synthesize pimeloyl-ACP via the fatty acid synthetic pathway through the hydrolysis of the ester bonds of pimeloyl-ACP esters. The protein is Pimeloyl-[acyl-carrier protein] methyl ester esterase of Escherichia coli O6:H1 (strain CFT073 / ATCC 700928 / UPEC).